Here is a 159-residue protein sequence, read N- to C-terminus: Growth arrest and DNA damage-inducible protein GADD45 gamma (159 aa).

Residues Val43–Cys86 are homodimerization.

It belongs to the GADD45 family. As to quaternary structure, undergoes concentration-dependent homodimerization, which is required for growth inhibititory activity and enhances interaction with PCNA. Interacts with GADD45GIP1. Interacts with PCNA.

Involved in the regulation of growth and apoptosis. Mediates activation of stress-responsive MTK1/MEKK4 MAPKKK. In Rattus norvegicus (Rat), this protein is Growth arrest and DNA damage-inducible protein GADD45 gamma (Gadd45g).